Reading from the N-terminus, the 546-residue chain is CTP synthase (546 aa).

The tract at residues 1–266 is amidoligase domain; it reads MTTNYIFVTG…DDLVCQRFGI (266 aa). S14 contacts CTP. S14 serves as a coordination point for UTP. ATP is bound by residues 15 to 20 and D72; that span reads SLGKGI. Mg(2+)-binding residues include D72 and E140. CTP-binding positions include 147 to 149, 187 to 192, and K223; these read DIE and KTKPTQ. Residues 187–192 and K223 each bind UTP; that span reads KTKPTQ. Residue 239–241 coordinates ATP; the sequence is KDV. Residues 291-542 form the Glutamine amidotransferase type-1 domain; the sequence is TIGMVGKYIE…VKAAGENARG (252 aa). An L-glutamine-binding site is contributed by G352. C379 functions as the Nucleophile; for glutamine hydrolysis in the catalytic mechanism. Residues 380–383, E403, and R470 contribute to the L-glutamine site; that span reads LGMQ. Residues H515 and E517 contribute to the active site.

This sequence belongs to the CTP synthase family. As to quaternary structure, homotetramer.

It carries out the reaction UTP + L-glutamine + ATP + H2O = CTP + L-glutamate + ADP + phosphate + 2 H(+). The enzyme catalyses L-glutamine + H2O = L-glutamate + NH4(+). It catalyses the reaction UTP + NH4(+) + ATP = CTP + ADP + phosphate + 2 H(+). The protein operates within pyrimidine metabolism; CTP biosynthesis via de novo pathway; CTP from UDP: step 2/2. Allosterically activated by GTP, when glutamine is the substrate; GTP has no effect on the reaction when ammonia is the substrate. The allosteric effector GTP functions by stabilizing the protein conformation that binds the tetrahedral intermediate(s) formed during glutamine hydrolysis. Inhibited by the product CTP, via allosteric rather than competitive inhibition. In terms of biological role, catalyzes the ATP-dependent amination of UTP to CTP with either L-glutamine or ammonia as the source of nitrogen. Regulates intracellular CTP levels through interactions with the four ribonucleotide triphosphates. The chain is CTP synthase from Aliivibrio salmonicida (strain LFI1238) (Vibrio salmonicida (strain LFI1238)).